The following is a 305-amino-acid chain: MARVTCDPVVQRRVASTASLRAWAVESAQGVEGSCYANLPAGVRTSEMNCHHLLNHLHEKGHLGVAAALQVLRGADEDRHVFDAGRLAPGQHALHVFGTVSMADAWVGHAHLAGPSAVSVHDQADVLGQRPRCRLPPQPTGVQGVEEVGGAHRETFRMVSRADRSSWCTAEVGSSRSPAASVVLPGGTRPGTCAVGVRRFTATEYYVSRTTCCVASWERIPKVDHTWRSHAHQRRPDARAVRTGRRAAARVRHQRCHRAGLRSPPRTREPLWSLGPSGGEAAGEAPGGKGPPTPVLPHARRAGAA.

Residues 255-305 (RCHRAGLRSPPRTREPLWSLGPSGGEAAGEAPGGKGPPTPVLPHARRAGAA) form a disordered region. A compositionally biased stretch (gly residues) spans 276 to 288 (PSGGEAAGEAPGG).

This is an uncharacterized protein from Streptomyces fradiae (Streptomyces roseoflavus).